The following is a 254-amino-acid chain: RNA polymerase sigma factor SigI8 (254 aa).

A Polymerase core binding motif is present at residues 61-74; sequence DEYSIALIAFNEAI. The H-T-H motif DNA-binding region spans 209–228; it reads YKELTERFNLCRRTLEKNRK.

Belongs to the sigma-70 factor family. SigI subfamily. In terms of assembly, interacts with RsgI8.

It is found in the cytoplasm. Its activity is regulated as follows. Negatively regulated by the anti-sigma-I factor RsgI8. Functionally, sigma factors are initiation factors that promote the attachment of RNA polymerase to specific initiation sites and are then released. This Acetivibrio thermocellus (strain ATCC 27405 / DSM 1237 / JCM 9322 / NBRC 103400 / NCIMB 10682 / NRRL B-4536 / VPI 7372) (Clostridium thermocellum) protein is RNA polymerase sigma factor SigI8.